Reading from the N-terminus, the 484-residue chain is Nuclear rim protein 1 (484 aa).

Ser-3 is modified (phosphoserine). A run of 2 helical transmembrane segments spans residues 145-165 (FTIF…MFGY) and 252-272 (TAIV…AIVF). Residues 416 to 458 (SSNENLEKGGAFLPNQDQNRPSKSLSPLRKTPLSARQKRFEGS) are disordered. Phosphoserine is present on Ser-417. Positions 430 to 440 (NQDQNRPSKSL) are enriched in polar residues. The residue at position 474 (Ser-474) is a Phosphoserine.

It belongs to the NUR1 family. Interacts with CSM1.

The protein resides in the nucleus membrane. Functionally, member of a perinuclear network that controls recombination at multiple loci to maintain genome stability. Required for rDNA repeat stability. In Saccharomyces cerevisiae (strain YJM789) (Baker's yeast), this protein is Nuclear rim protein 1 (NUR1).